The sequence spans 350 residues: tRNA uridine(34) hydroxylase (350 aa).

The Rhodanese domain occupies 146–240 (DDPDTLFVDM…YARKAKEQGL (95 aa)). Catalysis depends on Cys-200, which acts as the Cysteine persulfide intermediate.

Belongs to the TrhO family.

The catalysed reaction is uridine(34) in tRNA + AH2 + O2 = 5-hydroxyuridine(34) in tRNA + A + H2O. Catalyzes oxygen-dependent 5-hydroxyuridine (ho5U) modification at position 34 in tRNAs. The sequence is that of tRNA uridine(34) hydroxylase from Yersinia enterocolitica serotype O:8 / biotype 1B (strain NCTC 13174 / 8081).